We begin with the raw amino-acid sequence, 589 residues long: MTLHSNSTTSPLFPNISSSWVHSPSEAGLPLGTVSQLDSYNISQTSGNFSSNDTSSDPLGGHTIWQVVFIAFLTGFLALVTIIGNILVIVAFKVNKQLKTVNNYFLLSLACADLIIGVISMNLFTTYIIMNRWALGNLACDLWLSIDYVASNASVMNLLVISFDRYFSITRPLTYRAKRTTKRAGVMIGLAWVISFVLWAPAILFWQYFVGKRTVPPGECFIQFLSEPTITFGTAIAAFYMPVTIMTILYWRIYKETEKRTKELAGLQASGTEAEAENFVHPTGSSRSCSSYELQQQGTKRSSRRKYGGCHFWFTTKSWKPSAEQMDQDHSSSDSWNNNDAAASLENSASSDEEDIGSETRAIYSIVLKLPGHSTILNSTKLPSSDNLQVPDKDLGTMDVERNAHKLQAQKSMDDRDNCQKDFSKLPIQLESAVDTAKTSDTNSSVDKTTAALPLSFKEATLAKRFALKTRSQITKRKRMSLIKEKKAAQTLSAILLAFIITWTPYNIMVLVNTFCDSCIPKTYWNLGYWLCYINSTVNPVCYALCNKTFRTTFKMLLLCQCDKRKRRKQQYQQRQSVIFHKRVPEQAL.

Residues 1 to 66 are Extracellular-facing; the sequence is MTLHSNSTTS…DPLGGHTIWQ (66 aa). N-linked (GlcNAc...) asparagine glycans are attached at residues asparagine 6, asparagine 15, asparagine 41, asparagine 48, and asparagine 52. The helical transmembrane segment at 67 to 90 threads the bilayer; that stretch reads VVFIAFLTGFLALVTIIGNILVIV. Over 91–103 the chain is Cytoplasmic; sequence AFKVNKQLKTVNN. Residues 104-129 traverse the membrane as a helical segment; that stretch reads YFLLSLACADLIIGVISMNLFTTYII. Over 130 to 141 the chain is Extracellular; sequence MNRWALGNLACD. A disulfide bond links cysteine 140 and cysteine 220. Residues 142 to 163 traverse the membrane as a helical segment; it reads LWLSIDYVASNASVMNLLVISF. Over 164–183 the chain is Cytoplasmic; it reads DRYFSITRPLTYRAKRTTKR. A helical transmembrane segment spans residues 184-205; the sequence is AGVMIGLAWVISFVLWAPAILF. Over 206–228 the chain is Extracellular; the sequence is WQYFVGKRTVPPGECFIQFLSEP. A helical membrane pass occupies residues 229–251; that stretch reads TITFGTAIAAFYMPVTIMTILYW. The Cytoplasmic portion of the chain corresponds to 252-490; that stretch reads RIYKETEKRT…SLIKEKKAAQ (239 aa). A Basolateral sorting signal motif is present at residues 274–280; it reads AEAENFV. 2 disordered regions span residues 275–295 and 323–356; these read EAEN…YELQ and AEQM…EEDI. Polar residues predominate over residues 283–295; it reads TGSSRSCSSYELQ. The span at 333 to 344 shows a compositional bias: low complexity; sequence SDSWNNNDAAAS. Residue serine 384 is modified to Phosphoserine. The chain crosses the membrane as a helical span at residues 491-513; sequence TLSAILLAFIITWTPYNIMVLVN. The Extracellular portion of the chain corresponds to 514-525; the sequence is TFCDSCIPKTYW. Cysteine 516 and cysteine 519 form a disulfide bridge. The helical transmembrane segment at 526-545 threads the bilayer; that stretch reads NLGYWLCYINSTVNPVCYAL. Topologically, residues 546–589 are cytoplasmic; sequence CNKTFRTTFKMLLLCQCDKRKRRKQQYQQRQSVIFHKRVPEQAL.

This sequence belongs to the G-protein coupled receptor 1 family. Muscarinic acetylcholine receptor subfamily. CHRM3 sub-subfamily. As to quaternary structure, homodimer; the dimers can form tetramers. Interacts with NALCN. Interacts with TMEM147. As to expression, expressed in cerebral cortex, submandibular gland, hypothalamus, pancreas, liver, and ileum.

It localises to the cell membrane. The protein localises to the postsynaptic cell membrane. The protein resides in the basolateral cell membrane. It is found in the endoplasmic reticulum membrane. Its function is as follows. The muscarinic acetylcholine receptor mediates various cellular responses, including inhibition of adenylate cyclase, breakdown of phosphoinositides and modulation of potassium channels through the action of G proteins. Primary transducing effect is Pi turnover. The polypeptide is Muscarinic acetylcholine receptor M3 (Chrm3) (Mus musculus (Mouse)).